Consider the following 239-residue polypeptide: 2',3'-cyclic-nucleotide 3'-phosphodiesterase (239 aa).

Catalysis depends on proton donor/acceptor residues histidine 39 and histidine 150.

Belongs to the 2H phosphoesterase superfamily. CPD1 family.

The protein localises to the golgi apparatus. The catalysed reaction is ADP-alpha-D-ribose 1'',2''-cyclic phosphate + H2O = ADP-alpha-D-ribose 1''-phosphate + H(+). It carries out the reaction 2',3'-cyclophospho-AMP + H2O = adenosine 2'-phosphate + H(+). The enzyme catalyses 2',3'-cyclophospho-GMP + H2O = guanosine 2'-phosphate + H(+). It catalyses the reaction 2',3'-cyclophospho-UMP + H2O = uridine 2'-phosphate + H(+). The catalysed reaction is 2',3'-cyclophospho-CMP + H2O = cytidine 2'-phosphate + H(+). It carries out the reaction a nucleoside 2',3'-cyclic phosphate + H2O = a nucleoside 2'-phosphate + H(+). In terms of biological role, involved in the metabolism of ADP-ribose 1',2'-cyclic phosphate which is produced as a consequence of tRNA splicing. The sequence is that of 2',3'-cyclic-nucleotide 3'-phosphodiesterase from Saccharomyces cerevisiae (strain ATCC 204508 / S288c) (Baker's yeast).